The following is a 320-amino-acid chain: Ferrochelatase (320 aa).

Fe cation-binding residues include His194 and Glu275.

It belongs to the ferrochelatase family. In terms of assembly, monomer.

It is found in the cytoplasm. It carries out the reaction heme b + 2 H(+) = protoporphyrin IX + Fe(2+). It functions in the pathway porphyrin-containing compound metabolism; protoheme biosynthesis; protoheme from protoporphyrin-IX: step 1/1. Functionally, catalyzes the ferrous insertion into protoporphyrin IX. In Escherichia coli O127:H6 (strain E2348/69 / EPEC), this protein is Ferrochelatase.